The sequence spans 287 residues: Small ribosomal subunit protein uS3 (287 aa).

Residues 38–106 (IRRLLATGLE…QVQLNILEVK (69 aa)) enclose the KH type-2 domain. Residues 216–287 (AAAPAGADRP…AETTTQNPGS (72 aa)) are disordered. Low complexity predominate over residues 238-287 (SGASGTTATSTDAGRAASGTQEAPAAAEAAAGTEAAAGAAAETTTQNPGS).

It belongs to the universal ribosomal protein uS3 family. As to quaternary structure, part of the 30S ribosomal subunit. Forms a tight complex with proteins S10 and S14.

Functionally, binds the lower part of the 30S subunit head. Binds mRNA in the 70S ribosome, positioning it for translation. In Mycobacterium sp. (strain JLS), this protein is Small ribosomal subunit protein uS3.